The sequence spans 173 residues: Alpha-crystallin A chain (173 aa).

At methionine 1 the chain carries N-acetylmethionine. The interval 1 to 63 is required for complex formation with BFSP1 and BFSP2; it reads MDIAIQHPWF…RTVLDSGISE (63 aa). Glutamine 6 is modified (deamidated glutamine; partial). Serine 45 bears the Phosphoserine mark. Glutamine 50 bears the Deamidated glutamine; partial mark. One can recognise a sHSP domain in the interval 52 to 162; the sequence is LFRTVLDSGI…GHSERAIPVS (111 aa). Lysine 70 bears the N6-acetyllysine mark. The residue at position 90 (glutamine 90) is a Deamidated glutamine; partial. At lysine 99 the chain carries N6-acetyllysine. Residue histidine 100 participates in Zn(2+) binding. Asparagine 101 is modified (deamidated asparagine; partial). The Zn(2+) site is built by glutamate 102 and histidine 107. Serine 122 carries the phosphoserine modification. Asparagine 123 is modified (deamidated asparagine; partial). The interval 144–173 is disordered; it reads PKIPSGMDAGHSERAIPVSREEKPGSAPSS. The segment covering 153-167 has biased composition (basic and acidic residues); the sequence is GHSERAIPVSREEKP. Histidine 154 is a Zn(2+) binding site. O-linked (GlcNAc) serine glycosylation occurs at serine 162.

It belongs to the small heat shock protein (HSP20) family. Heteromer composed of three CRYAA and one CRYAB subunits. Inter-subunit bridging via zinc ions enhances stability, which is crucial as there is no protein turn over in the lens. Can also form homodimers and homotetramers (dimers of dimers) which serve as the building blocks of homooligomers. Within homooligomers, the zinc-binding motif is created from residues of 3 different molecules. His-100 and Glu-102 from one molecule are ligands of the zinc ion, and His-107 and His-154 residues from additional molecules complete the site with tetrahedral coordination geometry. Part of a complex required for lens intermediate filament formation composed of BFSP1, BFSP2 and CRYAA. Acetylation at Lys-70 may increase chaperone activity. In terms of processing, undergoes age-dependent proteolytical cleavage at the C-terminus.

The protein localises to the cytoplasm. Its subcellular location is the nucleus. Functionally, contributes to the transparency and refractive index of the lens. Acts as a chaperone, preventing aggregation of various proteins under a wide range of stress conditions. Required for the correct formation of lens intermediate filaments as part of a complex composed of BFSP1, BFSP2 and CRYAA. The protein is Alpha-crystallin A chain (CRYAA) of Equus caballus (Horse).